The sequence spans 568 residues: Probable pectinesterase/pectinesterase inhibitor 23 (568 aa).

An N-terminal signal peptide occupies residues 1 to 33; the sequence is MGSDGDKKKKFIVAGSVSGFLVIMVVSVAVVTS. The pectinesterase inhibitor 23 stretch occupies residues 45–198; that stretch reads RKTTKAVQAV…RELSSNSLAM (154 aa). N-linked (GlcNAc...) asparagine glycosylation is found at asparagine 94, asparagine 210, and asparagine 316. Positions 251 to 548 are pectinesterase 23; it reads PGPVKANAVV…PQDALLYTGD (298 aa). Substrate is bound by residues threonine 333 and glutamine 363. The Proton donor; for pectinesterase activity role is filled by aspartate 386. Cysteine 400 and cysteine 420 are oxidised to a cystine. The active-site Nucleophile; for pectinesterase activity is the aspartate 407. Residues arginine 475 and tryptophan 477 each contribute to the substrate site.

It in the N-terminal section; belongs to the PMEI family. In the C-terminal section; belongs to the pectinesterase family. As to expression, expressed in mature pollen grains in the anthers and on the stigma. Found in pollen tubes within the style.

The protein resides in the secreted. Its subcellular location is the cell wall. It carries out the reaction [(1-&gt;4)-alpha-D-galacturonosyl methyl ester](n) + n H2O = [(1-&gt;4)-alpha-D-galacturonosyl](n) + n methanol + n H(+). It functions in the pathway glycan metabolism; pectin degradation; 2-dehydro-3-deoxy-D-gluconate from pectin: step 1/5. Functionally, acts in the modification of cell walls via demethylesterification of cell wall pectin. This is Probable pectinesterase/pectinesterase inhibitor 23 (PME23) from Arabidopsis thaliana (Mouse-ear cress).